A 265-amino-acid chain; its full sequence is Deoxyribose-phosphate aldolase 2 (265 aa).

The active-site Proton donor/acceptor is Asp-108. Lys-173 acts as the Schiff-base intermediate with acetaldehyde in catalysis. Lys-207 serves as the catalytic Proton donor/acceptor.

This sequence belongs to the DeoC/FbaB aldolase family. DeoC type 2 subfamily.

The protein resides in the cytoplasm. It catalyses the reaction 2-deoxy-D-ribose 5-phosphate = D-glyceraldehyde 3-phosphate + acetaldehyde. Its pathway is carbohydrate degradation; 2-deoxy-D-ribose 1-phosphate degradation; D-glyceraldehyde 3-phosphate and acetaldehyde from 2-deoxy-alpha-D-ribose 1-phosphate: step 2/2. Catalyzes a reversible aldol reaction between acetaldehyde and D-glyceraldehyde 3-phosphate to generate 2-deoxy-D-ribose 5-phosphate. The chain is Deoxyribose-phosphate aldolase 2 (deoC2) from Yersinia pestis.